Reading from the N-terminus, the 592-residue chain is Aspartate--tRNA(Asp/Asn) ligase (592 aa).

Glutamate 177 is an L-aspartate binding site. Residues 201 to 204 (QLFK) form an aspartate region. Arginine 223 serves as a coordination point for L-aspartate. ATP-binding positions include 223 to 225 (RDE) and glutamine 232. Histidine 451 serves as a coordination point for L-aspartate. Residue glutamate 485 participates in ATP binding. Position 492 (arginine 492) interacts with L-aspartate. 537–540 (GLDR) is an ATP binding site.

Belongs to the class-II aminoacyl-tRNA synthetase family. Type 1 subfamily. In terms of assembly, homodimer.

It localises to the cytoplasm. The catalysed reaction is tRNA(Asx) + L-aspartate + ATP = L-aspartyl-tRNA(Asx) + AMP + diphosphate. Aspartyl-tRNA synthetase with relaxed tRNA specificity since it is able to aspartylate not only its cognate tRNA(Asp) but also tRNA(Asn). Reaction proceeds in two steps: L-aspartate is first activated by ATP to form Asp-AMP and then transferred to the acceptor end of tRNA(Asp/Asn). The chain is Aspartate--tRNA(Asp/Asn) ligase from Bacillus subtilis (strain 168).